Here is a 492-residue protein sequence, read N- to C-terminus: Endoglycoceramidase I (492 aa).

Residues 1 to 14 (MRKTVVAFAAAIAA) form the signal peptide. The N-palmitoyl cysteine moiety is linked to residue Cys-15. The S-diacylglycerol cysteine moiety is linked to residue Cys-15. Substrate is bound by residues Lys-61, Asp-62, 131 to 133 (HQD), and 213 to 214 (NE). Glu-214 serves as the catalytic Proton donor. A disulfide bond links Cys-224 and Cys-229. Substrate-binding residues include Asn-265, Gln-298, and Tyr-302. A disulfide bond links Cys-294 and Cys-313. Catalysis depends on Glu-339, which acts as the Nucleophile. Trp-365 is a binding site for substrate. The segment at 467–492 (NRPGSAGAEVPDGPIETSSSGSSGSS) is disordered.

It belongs to the glycosyl hydrolase 5 (cellulase A) family.

It is found in the secreted. Its subcellular location is the membrane. It carries out the reaction an oligoglycosyl-(1-&gt;4)-beta-D-glucosyl-(1&lt;-&gt;1)-ceramide + H2O = an oligoglycosyl-(1-&gt;4)-D-glucose + an N-acyl-sphingoid base. The catalysed reaction is a ganglioside GM3 + H2O = N-acetyl-alpha-neuraminosyl-(2-&gt;3)-beta-D-galactosyl-(1-&gt;4)-D-glucose + an N-acyl-sphingoid base. It catalyses the reaction a ganglioside GM1 + H2O = beta-D-Gal-(1-&gt;3)-beta-D-GalNAc-(1-&gt;4)-[alpha-Neu5Ac-(2-&gt;3)]-beta-D-Gal-(1-&gt;4)-D-Glc + an N-acyl-sphingoid base. The enzyme catalyses a ganglioside Fuc-GM1 + H2O = alpha-Fuc-(1-&gt;2)-beta-Gal-(1-&gt;3)-beta-GalNAc-(1-&gt;4)-[alpha-Neu5Ac-(2-&gt;3)]-beta-Gal-(1-&gt;4)-Glc + an N-acyl-sphingoid base. It carries out the reaction a beta-D-galactosyl-(1-&gt;4)-beta-D-glucosyl-(1&lt;-&gt;1)-ceramide + H2O = lactose + an N-acyl-sphingoid base. Its function is as follows. Hydrolyzes glycosphingolipids; exhibits broad substrate specificity including monosialodihexosylganglioside (GM3), monosialotetrahexosylganglioside (GM1), fucosyl-GM1, lactosylceramide, globotriosylceramide, globotetraosylceramide, ganglioside GD1a, and ganglioside GD1b. No activity towards glucosylceramide and galactosylceramide. This is Endoglycoceramidase I from Rhodococcus hoagii (strain 103S) (Rhodococcus equi).